The following is a 110-amino-acid chain: UPF0060 membrane protein Bcep1808_1236 (110 aa).

3 helical membrane passes run 9 to 29 (ALFA…WLVL), 34 to 54 (PVWL…LLTL), and 66 to 86 (YGGV…GVAL).

It belongs to the UPF0060 family.

Its subcellular location is the cell inner membrane. The sequence is that of UPF0060 membrane protein Bcep1808_1236 from Burkholderia vietnamiensis (strain G4 / LMG 22486) (Burkholderia cepacia (strain R1808)).